Here is a 539-residue protein sequence, read N- to C-terminus: MIATQTFVSVFFFVFFLVSLPFFSSAAPPSSDSIYESFVQCFSDKTKSPQAQITDNVFSRTNPSFSSVLRAYIRNGRFNTSSTPKPAIIVTPRSDIHVSAAVTCSKSLNFLLKIRSGGHDYEGLSYISDKPFFILDMSNLRDVSVDIADQSAWISAGATLGEVYYRIWEKSKVHGFPAGVCPTVGVGGHISGGGYGNMLRKFGLSVDNLIDAKIVDVNGQILDRKSMGEDLFWAISGGGGASFGVVLGYKVKLVPVPETVTVFRVEKYMDSGAVDMVHKWQSVGPKTDRNLFLRMLIQPVTRKKVKTVRATVVALFLGRAEEVVALLGKEFPELSLKKENCSEMTWFQSALWWDNRVNPTQIDPKVFLDRNLDRANFGKRKSDYVASEIPRDGIESLFKKMTELGKIGLVFNPYGGKMAEVTVNATPFPHRSKLFKIQYSVTWQENSVEIEKGFLNQANVLYSFMTGFVSKNPRNAYLNYRDVDIGVNDHGTNSYEEGEVYGRKYFGDNFDRLVKVKTAADPDNFFRNEQSIPTVLSKA.

The N-terminal stretch at 1-26 (MIATQTFVSVFFFVFFLVSLPFFSSA) is a signal peptide. Cys41 and Cys104 are oxidised to a cystine. N-linked (GlcNAc...) asparagine glycosylation occurs at Asn79. An FAD-binding PCMH-type domain is found at 82–256 (STPKPAIIVT…LGYKVKLVPV (175 aa)). Residues 119–181 (HDYEGLSYIS…KVHGFPAGVC (63 aa)) constitute a cross-link (6-(S-cysteinyl)-8alpha-(pros-histidyl)-FAD (His-Cys)). The N-linked (GlcNAc...) asparagine glycan is linked to Asn340.

The protein belongs to the oxygen-dependent FAD-linked oxidoreductase family. The cofactor is FAD. In terms of processing, the FAD cofactor is bound via a bicovalent 6-S-cysteinyl, 8alpha-N1-histidyl FAD linkage.

It localises to the secreted. The protein localises to the cell wall. This is Berberine bridge enzyme-like 21 from Arabidopsis thaliana (Mouse-ear cress).